The sequence spans 438 residues: Probable D-serine dehydratase (438 aa).

At Lys114 the chain carries N6-(pyridoxal phosphate)lysine.

This sequence belongs to the serine/threonine dehydratase family. DsdA subfamily. It depends on pyridoxal 5'-phosphate as a cofactor.

The enzyme catalyses D-serine = pyruvate + NH4(+). The polypeptide is Probable D-serine dehydratase (Histophilus somni (strain 2336) (Haemophilus somnus)).